Consider the following 447-residue polypeptide: DNA primase DnaG (447 aa).

One can recognise a Toprim domain in the interval Asp-200–Glu-274. Positions 206, 248, and 250 each coordinate Mg(2+).

Belongs to the archaeal DnaG primase family. Forms a ternary complex with MCM helicase and DNA. Component of the archaeal exosome complex. Mg(2+) serves as cofactor.

The enzyme catalyses ssDNA + n NTP = ssDNA/pppN(pN)n-1 hybrid + (n-1) diphosphate.. In terms of biological role, RNA polymerase that catalyzes the synthesis of short RNA molecules used as primers for DNA polymerase during DNA replication. Also part of the exosome, which is a complex involved in RNA degradation. Acts as a poly(A)-binding protein that enhances the interaction between heteromeric, adenine-rich transcripts and the exosome. The sequence is that of DNA primase DnaG from Pyrococcus abyssi (strain GE5 / Orsay).